Reading from the N-terminus, the 459-residue chain is LETM1 domain-containing protein LETM2, mitochondrial (459 aa).

Residues methionine 1 to proline 25 constitute a mitochondrion transit peptide. The Mitochondrial intermembrane segment spans residues cysteine 26 to arginine 176. Positions glycine 88–valine 114 are disordered. Over residues glutamate 97 to glutamine 111 the composition is skewed to basic and acidic residues. The helical transmembrane segment at leucine 177–leucine 197 threads the bilayer. At lysine 198 to alanine 459 the chain is on the mitochondrial matrix side. The Letm1 RBD domain maps to lysine 220–isoleucine 440. Residues leucine 403–alanine 459 are disordered. Positions leucine 435–alanine 459 are enriched in polar residues.

Testis and sperm.

The protein resides in the mitochondrion inner membrane. This chain is LETM1 domain-containing protein LETM2, mitochondrial (Letm2), found in Rattus norvegicus (Rat).